Consider the following 476-residue polypeptide: MTKLRSKWLGLRSVTIFLINFSLAFAFVSAERRGKSLRLSTDETRENESSFFLKAINFLWESDQIGYRHVWPEFEFNWQIVLGTLVGFFGAAFGSVGGVGGGGIFVPMLSLIIGFDPKSATAISKCMIMGASVSTVYYNLRLRHPTLDMPIIDYDLALLIQPMLMLGISIGVAFNVIFPDWLVTVLLIVLFLGTSTKAFLKGSETWNKETIEKKEAAKRLESNGVSGTEVEYVPLPAAPSTNPGNKKKEEVSIIENVYWKELGLLVFVWIVFLALQISKQNLANCSVAYWVINLLQIPVAVGVSGYEAVALYQGRRIIASKGQGDSNFTVGQLVMYCTFGIIAGIVGGLLGLGGGFIMGPLFLELGVPPQVSSATATFAMTFSSSMSVVEYYLLKRFPVPYALYLVGVATIAAWVGQHVVRRLIAAIGRASLIIFILASMIFISAISLGGVGIVNMIGKIQRHEYMGFENLCKYGG.

The next 12 helical transmembrane spans lie at 8-28, 76-92, 99-115, 120-142, 151-171, 172-192, 257-277, 291-311, 339-359, 360-380, 397-417, and 433-453; these read WLGL…FAFV, FNWQ…FGAA, VGGG…IIGF, ATAI…NLRL, IIDY…ISIG, VAFN…VLFL, VYWK…ALQI, VINL…AVAL, FGII…FIMG, PLFL…TFAM, FPVP…WVGQ, and IIFI…GVGI.

It belongs to the 4-toluene sulfonate uptake permease (TSUP) (TC 2.A.102) family.

It is found in the membrane. The sequence is that of Sulfite exporter TauE/SafE family protein 3 from Arabidopsis thaliana (Mouse-ear cress).